A 309-amino-acid polypeptide reads, in one-letter code: Homoserine O-succinyltransferase (309 aa).

The active-site Acyl-thioester intermediate is the C142. Positions 163 and 192 each coordinate substrate. The active-site Proton acceptor is H235. The active site involves E237. R249 contributes to the substrate binding site.

It belongs to the MetA family.

It localises to the cytoplasm. The enzyme catalyses L-homoserine + succinyl-CoA = O-succinyl-L-homoserine + CoA. It participates in amino-acid biosynthesis; L-methionine biosynthesis via de novo pathway; O-succinyl-L-homoserine from L-homoserine: step 1/1. In terms of biological role, transfers a succinyl group from succinyl-CoA to L-homoserine, forming succinyl-L-homoserine. This is Homoserine O-succinyltransferase from Cronobacter sakazakii (strain ATCC BAA-894) (Enterobacter sakazakii).